The sequence spans 503 residues: ATP synthase subunit alpha (503 aa).

170-177 (GDRQTGKT) lines the ATP pocket.

This sequence belongs to the ATPase alpha/beta chains family. As to quaternary structure, F-type ATPases have 2 components, CF(1) - the catalytic core - and CF(0) - the membrane proton channel. CF(1) has five subunits: alpha(3), beta(3), gamma(1), delta(1), epsilon(1). CF(0) has three main subunits: a(1), b(2) and c(9-12). The alpha and beta chains form an alternating ring which encloses part of the gamma chain. CF(1) is attached to CF(0) by a central stalk formed by the gamma and epsilon chains, while a peripheral stalk is formed by the delta and b chains.

It is found in the cell inner membrane. It carries out the reaction ATP + H2O + 4 H(+)(in) = ADP + phosphate + 5 H(+)(out). Produces ATP from ADP in the presence of a proton gradient across the membrane. The alpha chain is a regulatory subunit. The protein is ATP synthase subunit alpha of Geobacter metallireducens (strain ATCC 53774 / DSM 7210 / GS-15).